A 561-amino-acid chain; its full sequence is Zinc finger protein 394 (561 aa).

Position 12 is a phosphoserine (serine 12). A Glycyl lysine isopeptide (Lys-Gly) (interchain with G-Cter in SUMO2) cross-link involves residue lysine 40. The interval 43–62 (EDSLGSWEPSYPAASPDPET) is disordered. Positions 64 to 146 (RLHFRQLRYQ…AVVRALQRAL (83 aa)) constitute an SCAN box domain. A KRAB domain is found at 155-230 (VTFEDMAVSL…LQEAFQGKRP (76 aa)). Residues lysine 203 and lysine 228 each participate in a glycyl lysine isopeptide (Lys-Gly) (interchain with G-Cter in SUMO2) cross-link. Residues 238–247 (THEDRVEKQS) show a composition bias toward basic and acidic residues. The disordered stretch occupies residues 238–283 (THEDRVEKQSGDPLPLKLENSPEAEGFNSISDVNKNGSIEGEDSKN). Lysine 254 is covalently cross-linked (Glycyl lysine isopeptide (Lys-Gly) (interchain with G-Cter in SUMO2)). Positions 265–274 (NSISDVNKNG) are enriched in polar residues. Residue lysine 282 forms a Glycyl lysine isopeptide (Lys-Gly) (interchain with G-Cter in SUMO2) linkage. C2H2-type zinc fingers lie at residues 358–380 (YKCG…QRIH), 386–408 (YGCQ…QRTH), 414–436 (YTCL…QSTH), 442–463 (FKCE…QRLH), 469–491 (YKCE…HRIH), 497–519 (YGCS…QRIH), and 525–547 (YKCL…QRIH). Residue lysine 443 forms a Glycyl lysine isopeptide (Lys-Gly) (interchain with G-Cter in SUMO2) linkage.

Belongs to the krueppel C2H2-type zinc-finger protein family.

The protein localises to the nucleus. Its function is as follows. May be involved in transcriptional regulation. This chain is Zinc finger protein 394 (ZNF394), found in Pan paniscus (Pygmy chimpanzee).